Here is a 676-residue protein sequence, read N- to C-terminus: tRNA 5-methylaminomethyl-2-thiouridine biosynthesis bifunctional protein MnmC (676 aa).

The segment at 1–241 is tRNA (mnm(5)s(2)U34)-methyltransferase; that stretch reads MFTVTPAKIY…KRECLCGIKN (241 aa). The interval 268–676 is FAD-dependent cmnm(5)s(2)U34 oxidoreductase; that stretch reads IGGGIASLFT…RKLLKGTEIK (409 aa).

It in the N-terminal section; belongs to the methyltransferase superfamily. tRNA (mnm(5)s(2)U34)-methyltransferase family. This sequence in the C-terminal section; belongs to the DAO family. FAD is required as a cofactor.

The protein localises to the cytoplasm. It catalyses the reaction 5-aminomethyl-2-thiouridine(34) in tRNA + S-adenosyl-L-methionine = 5-methylaminomethyl-2-thiouridine(34) in tRNA + S-adenosyl-L-homocysteine + H(+). In terms of biological role, catalyzes the last two steps in the biosynthesis of 5-methylaminomethyl-2-thiouridine (mnm(5)s(2)U) at the wobble position (U34) in tRNA. Catalyzes the FAD-dependent demodification of cmnm(5)s(2)U34 to nm(5)s(2)U34, followed by the transfer of a methyl group from S-adenosyl-L-methionine to nm(5)s(2)U34, to form mnm(5)s(2)U34. This chain is tRNA 5-methylaminomethyl-2-thiouridine biosynthesis bifunctional protein MnmC, found in Histophilus somni (strain 2336) (Haemophilus somnus).